Here is a 599-residue protein sequence, read N- to C-terminus: Adenine deaminase (599 aa).

The disordered stretch occupies residues 1-31 (MARSNRRGGRGDPEDDPAWAPPGHRCAGERA).

This sequence belongs to the metallo-dependent hydrolases superfamily. Adenine deaminase family. Requires Mn(2+) as cofactor.

The catalysed reaction is adenine + H2O + H(+) = hypoxanthine + NH4(+). This is Adenine deaminase from Methanopyrus kandleri (strain AV19 / DSM 6324 / JCM 9639 / NBRC 100938).